We begin with the raw amino-acid sequence, 107 residues long: Nucleoid-associated protein RT0857 (107 aa).

It belongs to the YbaB/EbfC family. In terms of assembly, homodimer.

It localises to the cytoplasm. It is found in the nucleoid. Its function is as follows. Binds to DNA and alters its conformation. May be involved in regulation of gene expression, nucleoid organization and DNA protection. This is Nucleoid-associated protein RT0857 from Rickettsia typhi (strain ATCC VR-144 / Wilmington).